The following is a 417-amino-acid chain: Serine hydroxymethyltransferase (417 aa).

Residues L112 and 116–118 (GHL) each bind (6S)-5,6,7,8-tetrahydrofolate. At K221 the chain carries N6-(pyridoxal phosphate)lysine. E247 serves as a coordination point for (6S)-5,6,7,8-tetrahydrofolate.

The protein belongs to the SHMT family. In terms of assembly, homodimer. Pyridoxal 5'-phosphate serves as cofactor.

The protein resides in the cytoplasm. The catalysed reaction is (6R)-5,10-methylene-5,6,7,8-tetrahydrofolate + glycine + H2O = (6S)-5,6,7,8-tetrahydrofolate + L-serine. It functions in the pathway one-carbon metabolism; tetrahydrofolate interconversion. It participates in amino-acid biosynthesis; glycine biosynthesis; glycine from L-serine: step 1/1. Its function is as follows. Catalyzes the reversible interconversion of serine and glycine with tetrahydrofolate (THF) serving as the one-carbon carrier. This reaction serves as the major source of one-carbon groups required for the biosynthesis of purines, thymidylate, methionine, and other important biomolecules. Also exhibits THF-independent aldolase activity toward beta-hydroxyamino acids, producing glycine and aldehydes, via a retro-aldol mechanism. The sequence is that of Serine hydroxymethyltransferase from Borrelia duttonii (strain Ly).